Consider the following 380-residue polypeptide: 3-dehydroquinate synthase (380 aa).

Belongs to the archaeal-type DHQ synthase family.

The catalysed reaction is 2-amino-2,3,7-trideoxy-D-lyxo-hept-6-ulosonate + NAD(+) + H2O = 3-dehydroquinate + NH4(+) + NADH + H(+). Its function is as follows. Catalyzes the oxidative deamination and cyclization of 2-amino-3,7-dideoxy-D-threo-hept-6-ulosonic acid (ADH) to yield 3-dehydroquinate (DHQ), which is fed into the canonical shikimic pathway of aromatic amino acid biosynthesis. The sequence is that of 3-dehydroquinate synthase from Methanosarcina mazei (strain ATCC BAA-159 / DSM 3647 / Goe1 / Go1 / JCM 11833 / OCM 88) (Methanosarcina frisia).